The chain runs to 840 residues: Lethal(3)malignant brain tumor-like protein 1 (840 aa).

At Ser-117 the chain carries Phosphoserine. Positions 127–269 are disordered; the sequence is EYEDGGAPAG…WSSSQPATGE (143 aa). A compositionally biased stretch (acidic residues) spans 156–165; it reads PNQDPPEDDS. Over residues 200–210 the composition is skewed to polar residues; it reads VENSSGSTSAS. Basic and acidic residues predominate over residues 236–247; it reads AMEKQEEGKDPE. The segment covering 250–266 has biased composition (polar residues); it reads PTASTPESEEWSSSQPA. MBT repeat units follow at residues 274 to 374, 382 to 481, and 490 to 585; these read WSWE…LQPP, FSWS…LTPP, and FCWE…LQPP. An interaction with monomethylated and dimethylated peptides region spans residues 447–454; it reads FDNWDDTY. The interval 580–605 is disordered; sequence HPLQPPLGPREPSSASPGGCPPLSYR. The segment at 613–656 adopts a CCHHC-type zinc-finger fold; the sequence is SKYSFHHRKCPTPGCDGSGHVTGKFTAHHCLSGCPLAERNQSRL. Positions 622, 627, 640, and 646 each coordinate Zn(2+). The segment at 657-697 is disordered; that stretch reads KAELSDSEASARKKNLSGFSPRKKPRHHGRIGRPPKYRKIP. The segment covering 677-695 has biased composition (basic residues); that stretch reads PRKKPRHHGRIGRPPKYRK.

In terms of assembly, homodimer. Interacts with RB1/RB (when monomethylated at 'Lys-860'). Interacts with p53/TP53 (when monomethylated at 'Lys-382'). Interacts with CBX3, ETV6, KMT5A and VCP/p97. Post-translationally, ubiquitinated in a VCP/p97-dependent way following DNA damage, leading to its removal from DNA damage sites, promoting accessibility of H4K20me2 mark for DNA repair protein TP53BP1, which is then recruited to DNA damage sites. In terms of tissue distribution, widely expressed. Expression is reduced in colorectal cancer cell line SW480 and promyelocytic leukemia cell line HL-60.

It localises to the nucleus. Its function is as follows. Polycomb group (PcG) protein that specifically recognizes and binds mono- and dimethyllysine residues on target proteins, thereby acting as a 'reader' of a network of post-translational modifications. PcG proteins maintain the transcriptionally repressive state of genes: acts as a chromatin compaction factor by recognizing and binding mono- and dimethylated histone H1b/H1-4 at 'Lys-26' (H1bK26me1 and H1bK26me2) and histone H4 at 'Lys-20' (H4K20me1 and H4K20me2), leading to condense chromatin and repress transcription. Recognizes and binds p53/TP53 monomethylated at 'Lys-382', leading to repress p53/TP53-target genes. Also recognizes and binds RB1/RB monomethylated at 'Lys-860'. Participates in the ETV6-mediated repression. Probably plays a role in cell proliferation. Overexpression induces multinucleated cells, suggesting that it is required to accomplish normal mitosis. The chain is Lethal(3)malignant brain tumor-like protein 1 (L3MBTL1) from Homo sapiens (Human).